We begin with the raw amino-acid sequence, 316 residues long: L-lactate dehydrogenase (316 aa).

NAD(+)-binding positions include valine 15, aspartate 37, lysine 42, tyrosine 68, and 82-83 (GL). Substrate contacts are provided by residues glutamine 85, arginine 91, and 123–126 (NPVD). Residues 121–123 (ASN) and threonine 146 contribute to the NAD(+) site. 151 to 154 (DTSR) contributes to the substrate binding site. The beta-D-fructose 1,6-bisphosphate site is built by arginine 156 and histidine 171. The active-site Proton acceptor is histidine 178. Phosphotyrosine is present on tyrosine 222. Position 231 (threonine 231) interacts with substrate.

This sequence belongs to the LDH/MDH superfamily. LDH family. Homotetramer.

It is found in the cytoplasm. The catalysed reaction is (S)-lactate + NAD(+) = pyruvate + NADH + H(+). It functions in the pathway fermentation; pyruvate fermentation to lactate; (S)-lactate from pyruvate: step 1/1. Its activity is regulated as follows. Allosterically activated by fructose 1,6-bisphosphate (FBP). Catalyzes the conversion of lactate to pyruvate. The polypeptide is L-lactate dehydrogenase (Borrelia turicatae (strain 91E135)).